The chain runs to 2465 residues: Highly reducing polyketide synthase milA (2465 aa).

The Ketosynthase family 3 (KS3) domain maps to 1–434; the sequence is MEPIAIVGSA…GANCHVILEG (434 aa). Catalysis depends on for beta-ketoacyl synthase activity residues Cys172, His311, and His355. Positions 450–476 are disordered; that stretch reads KPSLSSSPSLSPTSTSPPTPRTPANSL. Residues 451–463 are compositionally biased toward low complexity; the sequence is PSLSSSPSLSPTS. Residues 567–888 are malonyl-CoA:ACP transacylase (MAT) domain; the sequence is VFTGQGAQWA…CGTLSRAVDD (322 aa). Residues 957–1096 form an N-terminal hotdog fold region; sequence HPLLGVRTNT…GKVQLFVGGD (140 aa). A dehydratase (DH) domain region spans residues 957–1265; that stretch reads HPLLGVRTNT…LTVSPVAPVT (309 aa). The 311-residue stretch at 957 to 1267 folds into the PKS/mFAS DH domain; the sequence is HPLLGVRTNT…VSPVAPVTAD (311 aa). The active-site Proton acceptor; for dehydratase activity is His989. Residues 1111-1267 form a C-terminal hotdog fold region; that stretch reads LNEIDVDTFY…VSPVAPVTAD (157 aa). Asp1174 serves as the catalytic Proton donor; for dehydratase activity. Positions 1334–1367 are disordered; the sequence is HSTNGLTNGHASTNGHGSTNGHISTNGHSTNGDV. Residues 2095 to 2269 are ketoreductase (KR)domain; sequence TYFLVGMAGS…AASVINLTGV (175 aa). Positions 2384–2459 constitute a Carrier domain; that stretch reads DMIFRAFQTV…QVVWSVVHQI (76 aa). At Ser2419 the chain carries O-(pantetheine 4'-phosphoryl)serine.

Pantetheine 4'-phosphate serves as cofactor.

It carries out the reaction 10 malonyl-CoA + acetyl-CoA + 3 AH2 + 8 NADPH + 18 H(+) = cordypyrone A + 3 A + 10 CO2 + 8 NADP(+) + 11 CoA + 8 H2O. The protein operates within secondary metabolite biosynthesis. In terms of biological role, highly reducing polyketide synthase (HR-PKS); part of the gene cluster that mediates the biosynthesis of cordypyrones A and B, 2 pyrones that show modest activities against pathogenic bacteria including methicillin-resistant Staphylococcus aureus (MRSA), Mycobacterium tuberculosis and Bacillus cereus. The HR-PKS milA catalyzes the formation of cordypyrones A via condensation of one acetate with 10 malonate units. Since milA lacks an enoyl reductase domain, the 2 beta-keto processing domains DH and KR of milA collaborate with the trans-enoyl reductase milB to catalyze the different levels of reduction. The cytochrome P450 monooxygenase milC then hydroxylates the C-22 of cordypyrones A to yield cordypyrones B. The protein is Highly reducing polyketide synthase milA of Cordyceps militaris (strain CM01) (Caterpillar fungus).